The sequence spans 957 residues: Glycine dehydrogenase (decarboxylating) 2 (957 aa).

The residue at position 707 (Lys707) is an N6-(pyridoxal phosphate)lysine.

This sequence belongs to the GcvP family. In terms of assembly, the glycine cleavage system is composed of four proteins: P, T, L and H. The cofactor is pyridoxal 5'-phosphate.

The enzyme catalyses N(6)-[(R)-lipoyl]-L-lysyl-[glycine-cleavage complex H protein] + glycine + H(+) = N(6)-[(R)-S(8)-aminomethyldihydrolipoyl]-L-lysyl-[glycine-cleavage complex H protein] + CO2. In terms of biological role, the glycine cleavage system catalyzes the degradation of glycine. The P protein binds the alpha-amino group of glycine through its pyridoxal phosphate cofactor; CO(2) is released and the remaining methylamine moiety is then transferred to the lipoamide cofactor of the H protein. The sequence is that of Glycine dehydrogenase (decarboxylating) 2 from Pseudomonas fluorescens (strain Pf0-1).